The sequence spans 471 residues: MKIKTRFAPSPTGYLHVGGARTALYSWLFARNHGGEFVLRIEDTDLERSTPEAIEAIMDGMNWLSLEWDEGPYFQTKRFDRYNAVIDQMLEEGTAYKCYCSKERLEALREEQMAKGEKPRYDDRCRHSHEHHADDEPCVVRFANPQEGSVVFDDQIRGPIEFSNQELDDLIIRRTDGSPTYNFCVVVDDWDMEITHVIRGEDHINNTPRQINILKALKAPVPVYAHVSMINGDDGKKLSKRHGAVSVMQYRDDGYLPEALLNYLVRLGWSHGDQEIFTREEMIKYFTLNAVSKSASAFNTDKLLWLNHHYINALPPEYVATHLQWHIEQENIDTRNGPQLADLVKLLGERCKTLKEMAQSCRYFYEDFAEFDADAAKKHLRPVARQPLEVVRDKLAAITDWTAENVHHAIQATADELEVGMGKVGMPLRVAVTGAGQSPALDVTVHAIGKTRSIERINKALAFIAERENQQ.

The 'HIGH' region signature appears at 9–19 (PSPTGYLHVGG). Zn(2+)-binding residues include cysteine 98, cysteine 100, cysteine 125, and histidine 127. Residues 237 to 241 (KLSKR) carry the 'KMSKS' region motif. ATP is bound at residue lysine 240.

It belongs to the class-I aminoacyl-tRNA synthetase family. Glutamate--tRNA ligase type 1 subfamily. As to quaternary structure, monomer. Zn(2+) serves as cofactor.

The protein localises to the cytoplasm. It carries out the reaction tRNA(Glu) + L-glutamate + ATP = L-glutamyl-tRNA(Glu) + AMP + diphosphate. Catalyzes the attachment of glutamate to tRNA(Glu) in a two-step reaction: glutamate is first activated by ATP to form Glu-AMP and then transferred to the acceptor end of tRNA(Glu). This chain is Glutamate--tRNA ligase, found in Shigella dysenteriae serotype 1 (strain Sd197).